A 269-amino-acid chain; its full sequence is Ribonuclease HII (269 aa).

The RNase H type-2 domain occupies 83–269 (YLIAGVDEVG…HRMSFLTNIL (187 aa)). A divalent metal cation is bound by residues Asp89, Glu90, and Asp185.

It belongs to the RNase HII family. Requires Mn(2+) as cofactor. The cofactor is Mg(2+).

The protein localises to the cytoplasm. It carries out the reaction Endonucleolytic cleavage to 5'-phosphomonoester.. Endonuclease that specifically degrades the RNA of RNA-DNA hybrids. The polypeptide is Ribonuclease HII (Clostridium botulinum (strain Loch Maree / Type A3)).